The primary structure comprises 186 residues: dCTP deaminase, dUMP-forming (186 aa).

DCTP-binding positions include 99–104, aspartate 117, 125–127, glutamine 146, tyrosine 159, lysine 166, and glutamine 170; these read KSSIAR and TLE. Glutamate 127 serves as the catalytic Proton donor/acceptor.

This sequence belongs to the dCTP deaminase family. As to quaternary structure, homotrimer.

It catalyses the reaction dCTP + 2 H2O = dUMP + NH4(+) + diphosphate. It functions in the pathway pyrimidine metabolism; dUMP biosynthesis; dUMP from dCTP: step 1/1. Bifunctional enzyme that catalyzes both the deamination of dCTP to dUTP and the hydrolysis of dUTP to dUMP without releasing the toxic dUTP intermediate. The polypeptide is dCTP deaminase, dUMP-forming (Methanosphaerula palustris (strain ATCC BAA-1556 / DSM 19958 / E1-9c)).